Reading from the N-terminus, the 327-residue chain is Succinylglutamate desuccinylase (327 aa).

Zn(2+)-binding residues include histidine 53, glutamate 56, and histidine 146. Glutamate 209 is a catalytic residue.

This sequence belongs to the AspA/AstE family. Succinylglutamate desuccinylase subfamily. Zn(2+) serves as cofactor.

The catalysed reaction is N-succinyl-L-glutamate + H2O = L-glutamate + succinate. It participates in amino-acid degradation; L-arginine degradation via AST pathway; L-glutamate and succinate from L-arginine: step 5/5. Transforms N(2)-succinylglutamate into succinate and glutamate. The sequence is that of Succinylglutamate desuccinylase from Serratia proteamaculans (strain 568).